Reading from the N-terminus, the 205-residue chain is Urease accessory protein UreG (205 aa).

14 to 21 (GPVGSGKT) contributes to the GTP binding site.

Belongs to the SIMIBI class G3E GTPase family. UreG subfamily. In terms of assembly, homodimer. UreD, UreF and UreG form a complex that acts as a GTP-hydrolysis-dependent molecular chaperone, activating the urease apoprotein by helping to assemble the nickel containing metallocenter of UreC. The UreE protein probably delivers the nickel.

Its subcellular location is the cytoplasm. In terms of biological role, facilitates the functional incorporation of the urease nickel metallocenter. This process requires GTP hydrolysis, probably effectuated by UreG. This Escherichia coli O157:H7 protein is Urease accessory protein UreG.